A 605-amino-acid polypeptide reads, in one-letter code: Elongation factor 4 (605 aa).

The tr-type G domain maps to 11-193 (KRIRNFSIIA…RIVTQISPPK (183 aa)). Residues 23-28 (DHGKST) and 140-143 (NKVD) each bind GTP.

The protein belongs to the TRAFAC class translation factor GTPase superfamily. Classic translation factor GTPase family. LepA subfamily.

The protein resides in the cell membrane. The enzyme catalyses GTP + H2O = GDP + phosphate + H(+). Functionally, required for accurate and efficient protein synthesis under certain stress conditions. May act as a fidelity factor of the translation reaction, by catalyzing a one-codon backward translocation of tRNAs on improperly translocated ribosomes. Back-translocation proceeds from a post-translocation (POST) complex to a pre-translocation (PRE) complex, thus giving elongation factor G a second chance to translocate the tRNAs correctly. Binds to ribosomes in a GTP-dependent manner. The protein is Elongation factor 4 of Phytoplasma australiense.